Consider the following 205-residue polypeptide: Holliday junction branch migration complex subunit RuvA (205 aa).

The domain I stretch occupies residues 1-64 (MIGKLRGIVD…DEAIRLIGFT (64 aa)). The tract at residues 65 to 143 (TDSEREWFRL…DSMGLSAALE (79 aa)) is domain II. The segment at 144-152 (VGVNGEAVS) is flexible linker. Positions 153–205 (SVSAPARDAVSALVNLGYPQAQAMGAVAAAAKRLDDAASTEQLIRHGLKELAR) are domain III.

This sequence belongs to the RuvA family. As to quaternary structure, homotetramer. Forms an RuvA(8)-RuvB(12)-Holliday junction (HJ) complex. HJ DNA is sandwiched between 2 RuvA tetramers; dsDNA enters through RuvA and exits via RuvB. An RuvB hexamer assembles on each DNA strand where it exits the tetramer. Each RuvB hexamer is contacted by two RuvA subunits (via domain III) on 2 adjacent RuvB subunits; this complex drives branch migration. In the full resolvosome a probable DNA-RuvA(4)-RuvB(12)-RuvC(2) complex forms which resolves the HJ.

The protein resides in the cytoplasm. Functionally, the RuvA-RuvB-RuvC complex processes Holliday junction (HJ) DNA during genetic recombination and DNA repair, while the RuvA-RuvB complex plays an important role in the rescue of blocked DNA replication forks via replication fork reversal (RFR). RuvA specifically binds to HJ cruciform DNA, conferring on it an open structure. The RuvB hexamer acts as an ATP-dependent pump, pulling dsDNA into and through the RuvAB complex. HJ branch migration allows RuvC to scan DNA until it finds its consensus sequence, where it cleaves and resolves the cruciform DNA. The chain is Holliday junction branch migration complex subunit RuvA from Parvibaculum lavamentivorans (strain DS-1 / DSM 13023 / NCIMB 13966).